Reading from the N-terminus, the 570-residue chain is Putative pyruvate decarboxylase C3G9.11c (570 aa).

Residues D30 and H119 each contribute to the pyruvate site. Thiamine diphosphate contacts are provided by residues T396 and 419 to 421; that span reads GSI. D451 serves as a coordination point for Mg(2+). Residues 452–453 and 478–483 each bind thiamine diphosphate; these read GS and NKGYTI. Mg(2+) contacts are provided by N478 and G480. Pyruvate is bound at residue E484.

Belongs to the TPP enzyme family. In terms of assembly, homotetramer. Mg(2+) is required as a cofactor. It depends on thiamine diphosphate as a cofactor.

It is found in the cytoplasm. It localises to the nucleus. It catalyses the reaction a 2-oxocarboxylate + H(+) = an aldehyde + CO2. It carries out the reaction pyruvate + H(+) = acetaldehyde + CO2. The chain is Putative pyruvate decarboxylase C3G9.11c from Schizosaccharomyces pombe (strain 972 / ATCC 24843) (Fission yeast).